A 308-amino-acid polypeptide reads, in one-letter code: Glutaminase 1 (308 aa).

Positions 64, 116, 161, 168, 192, 244, and 262 each coordinate substrate.

Belongs to the glutaminase family. In terms of assembly, homotetramer.

It carries out the reaction L-glutamine + H2O = L-glutamate + NH4(+). This is Glutaminase 1 from Halalkalibacterium halodurans (strain ATCC BAA-125 / DSM 18197 / FERM 7344 / JCM 9153 / C-125) (Bacillus halodurans).